We begin with the raw amino-acid sequence, 224 residues long: Cytidylate kinase (224 aa).

Position 11 to 19 (11 to 19 (GPAAAGKST)) interacts with ATP.

Belongs to the cytidylate kinase family. Type 1 subfamily.

Its subcellular location is the cytoplasm. It catalyses the reaction CMP + ATP = CDP + ADP. The enzyme catalyses dCMP + ATP = dCDP + ADP. The polypeptide is Cytidylate kinase (Listeria monocytogenes serovar 1/2a (strain ATCC BAA-679 / EGD-e)).